The chain runs to 345 residues: uncharacterized protein (345 aa).

This is an uncharacterized protein from Archaeoglobus fulgidus (strain ATCC 49558 / DSM 4304 / JCM 9628 / NBRC 100126 / VC-16).